We begin with the raw amino-acid sequence, 162 residues long: NADH-quinone oxidoreductase subunit I (162 aa).

2 4Fe-4S ferredoxin-type domains span residues 53–83 and 93–122; these read LRRYPNGEERCIACKLCEAVCPALAITIESD and TRYDIDLTKCIFCGFCEESCPVDSIVETHI. [4Fe-4S] cluster is bound by residues cysteine 63, cysteine 66, cysteine 69, cysteine 73, cysteine 102, cysteine 105, cysteine 108, and cysteine 112.

Belongs to the complex I 23 kDa subunit family. NDH-1 is composed of 14 different subunits. Subunits NuoA, H, J, K, L, M, N constitute the membrane sector of the complex. The cofactor is [4Fe-4S] cluster.

It localises to the cell inner membrane. It catalyses the reaction a quinone + NADH + 5 H(+)(in) = a quinol + NAD(+) + 4 H(+)(out). In terms of biological role, NDH-1 shuttles electrons from NADH, via FMN and iron-sulfur (Fe-S) centers, to quinones in the respiratory chain. The immediate electron acceptor for the enzyme in this species is believed to be ubiquinone. Couples the redox reaction to proton translocation (for every two electrons transferred, four hydrogen ions are translocated across the cytoplasmic membrane), and thus conserves the redox energy in a proton gradient. The protein is NADH-quinone oxidoreductase subunit I of Bordetella avium (strain 197N).